Here is a 466-residue protein sequence, read N- to C-terminus: MLYGKENRDEAEFLEPIFGSESEQVDLPKYKLAQQSIEPRVAYQLVQDEMLDEGNARLNLATFCQTYMEPEAVKLMSQTLEKNAIDKSEYPRTTEIENRCVNMIADLWNASEKEKFMGTSTIGSSEACMLGGMAMKFSWRKRAEKLGLDINAKKPNLVISSGYQVCWEKFCIYWDIEMREVPMDKEHMSINLDKVMDYVDEYTIGVVGIMGITYTGRYDDIKALDNLIEEYNKQTDYKVYIHVDAASGGLYAPFVEPELEWDFRLKNVISINTSGHKYGLVYPGVGWVLWRDKKYLPEELIFKVSYLGGELPTMAINFSHSASQLIGQYYNFVRYGFDGYKAIHERTHKVAMFLAKEIEKTGMFEIMNDGSQLPIVCYKLKEDSNRGWNLYDLADRLLMKGWQVPAYPLPKNLENEIIQRLVIRADFGMNMAFNYVQDMQEAIEALNKAHILYHEEPENKTYGFTH.

N6-(pyridoxal phosphate)lysine is present on lysine 277.

Belongs to the group II decarboxylase family. Pyridoxal 5'-phosphate is required as a cofactor.

The catalysed reaction is L-glutamate + H(+) = 4-aminobutanoate + CO2. Functionally, converts internalized glutamate to GABA and increases the internal pH. Involved in glutamate-dependent acid resistance. This is Glutamate decarboxylase (gadB) from Lactococcus lactis subsp. lactis (strain IL1403) (Streptococcus lactis).